A 105-amino-acid polypeptide reads, in one-letter code: MICOS complex subunit Mic10 (105 aa).

Residues 29 to 46 (LLKVTGGVAIGIVASVAF) traverse the membrane as a helical segment. At 47 to 105 (FKSRSWPIWFGSGVGLGTGWSNCRHDFASPYVLHGKRVPAGQDSQGKPAYNIITEQHKQ) the chain is on the mitochondrial intermembrane side. Residues 85–105 (PAGQDSQGKPAYNIITEQHKQ) form a disordered region.

Belongs to the MICOS complex subunit Mic10 family. As to quaternary structure, component of the mitochondrial contact site and cristae organizing system (MICOS) complex.

It is found in the mitochondrion inner membrane. In terms of biological role, component of the MICOS complex, a large protein complex of the mitochondrial inner membrane that plays crucial roles in the maintenance of crista junctions, inner membrane architecture, and formation of contact sites to the outer membrane. In Caenorhabditis elegans, this protein is MICOS complex subunit Mic10.